Here is a 234-residue protein sequence, read N- to C-terminus: Orotidine 5'-phosphate decarboxylase (234 aa).

Residues aspartate 10, lysine 31, 58-67 (DLKLHDIPNT), threonine 121, arginine 183, glutamine 192, glycine 212, and arginine 213 contribute to the substrate site. Lysine 60 functions as the Proton donor in the catalytic mechanism.

It belongs to the OMP decarboxylase family. Type 1 subfamily. In terms of assembly, homodimer.

It catalyses the reaction orotidine 5'-phosphate + H(+) = UMP + CO2. Its pathway is pyrimidine metabolism; UMP biosynthesis via de novo pathway; UMP from orotate: step 2/2. Catalyzes the decarboxylation of orotidine 5'-monophosphate (OMP) to uridine 5'-monophosphate (UMP). The polypeptide is Orotidine 5'-phosphate decarboxylase (Lysinibacillus sphaericus (strain C3-41)).